The primary structure comprises 342 residues: Ribosomal RNA small subunit methyltransferase C (342 aa).

Belongs to the methyltransferase superfamily. RsmC family. Monomer.

It is found in the cytoplasm. The catalysed reaction is guanosine(1207) in 16S rRNA + S-adenosyl-L-methionine = N(2)-methylguanosine(1207) in 16S rRNA + S-adenosyl-L-homocysteine + H(+). Functionally, specifically methylates the guanine in position 1207 of 16S rRNA in the 30S particle. This is Ribosomal RNA small subunit methyltransferase C from Cronobacter sakazakii (strain ATCC BAA-894) (Enterobacter sakazakii).